The following is a 170-amino-acid chain: dCTP pyrophosphatase 1 (170 aa).

Residues 1–25 (MSTAGDGERGTVGQEDSAAARPFRF) are disordered. An N-acetylserine modification is found at Ser2. A Phosphoserine modification is found at Ser2. Residues His38 and 47–51 (WEQFH) each bind substrate. 2 residues coordinate Mg(2+): Glu63 and Glu66. Residue Trp73 participates in substrate binding. Glu95 and Asp98 together coordinate Mg(2+). Tyr102 contributes to the substrate binding site. The disordered stretch occupies residues 150–170 (SENQAVGAGDPASELRDQAST).

As to quaternary structure, homotetramer. The cofactor is Mg(2+). Ubiquitous. Highly expressed in heart, liver, skeletal muscle, cerebellum, brain, and salivary gland.

The protein localises to the cytoplasm. Its subcellular location is the cytosol. It carries out the reaction dCTP + H2O = dCMP + diphosphate + H(+). With respect to regulation, inhibited by divalent calcium or cadmium ions. Functionally, hydrolyzes deoxynucleoside triphosphates (dNTPs) to the corresponding nucleoside monophosphates. Has a strong preference for dCTP and its analogs including 5-iodo-dCTP and 5-methyl-dCTP for which it may even have a higher efficiency. May protect DNA or RNA against the incorporation of these genotoxic nucleotide analogs through their catabolism. This chain is dCTP pyrophosphatase 1, found in Mus musculus (Mouse).